The primary structure comprises 445 residues: Anaerobilin synthase (445 aa).

The Radical SAM core domain maps to 52–287; it reads TASPRKRLVY…LQGCDFMDDA (236 aa). S-adenosyl-L-methionine is bound at residue Y61. C67 and C71 together coordinate [4Fe-4S] cluster. Position 73 (F73) interacts with S-adenosyl-L-methionine. Residue C74 participates in [4Fe-4S] cluster binding. S-adenosyl-L-methionine-binding positions include G118, 119–120, E151, Q178, R190, and D215; that span reads GT.

It belongs to the anaerobic coproporphyrinogen-III oxidase family. ChuW/HutW subfamily. It depends on [4Fe-4S] cluster as a cofactor.

It catalyses the reaction 2 reduced [flavodoxin] + heme b + 2 S-adenosyl-L-methionine = anaerobilin + 2 oxidized [flavodoxin] + Fe(2+) + 5'-deoxyadenosine + L-methionine + S-adenosyl-L-homocysteine. Its activity is regulated as follows. Inhibited by exposure to molecular oxygen. In terms of biological role, involved in heme degradation and iron utilization under anaerobic conditions. Catalyzes a radical-mediated mechanism facilitating iron liberation and the production of the tetrapyrrole product anaerobilin. Can use heme, mesoheme and deuteroheme as substrates. In Escherichia coli O157:H7, this protein is Anaerobilin synthase.